The sequence spans 526 residues: Cholesterol side-chain cleavage enzyme, mitochondrial (526 aa).

Residues 1 to 36 (MLAKGLSLRSVLVKGCQPFLSPTWQGPVLSTGKGAG) constitute a mitochondrion transit peptide. Positions 30–41 (STGKGAGTSTSS) are enriched in low complexity. Residues 30-49 (STGKGAGTSTSSPRSFNEIP) form a disordered region. Cys-458 lines the heme pocket.

It belongs to the cytochrome P450 family. Interacts with FDX1/adrenodoxin. Heme is required as a cofactor.

Its subcellular location is the mitochondrion inner membrane. The catalysed reaction is 6 reduced [adrenodoxin] + cholesterol + 3 O2 + 6 H(+) = 4-methylpentanal + pregnenolone + 6 oxidized [adrenodoxin] + 4 H2O. It carries out the reaction 2 reduced [adrenodoxin] + cholesterol + O2 + 2 H(+) = (22R)-hydroxycholesterol + 2 oxidized [adrenodoxin] + H2O. It catalyses the reaction (22R)-hydroxycholesterol + 2 reduced [adrenodoxin] + O2 + 2 H(+) = (20R,22R)-20,22-dihydroxycholesterol + 2 oxidized [adrenodoxin] + H2O. The enzyme catalyses (20R,22R)-20,22-dihydroxycholesterol + 2 reduced [adrenodoxin] + O2 + 2 H(+) = 4-methylpentanal + pregnenolone + 2 oxidized [adrenodoxin] + 2 H2O. Its pathway is lipid metabolism; C21-steroid hormone metabolism. The protein operates within steroid metabolism; cholesterol metabolism. Its function is as follows. A cytochrome P450 monooxygenase that catalyzes the side-chain hydroxylation and cleavage of cholesterol to pregnenolone, the precursor of most steroid hormones. Catalyzes three sequential oxidation reactions of cholesterol, namely the hydroxylation at C22 followed with the hydroxylation at C20 to yield 20R,22R-hydroxycholesterol that is further cleaved between C20 and C22 to yield the C21-steroid pregnenolone and 4-methylpentanal. Mechanistically, uses molecular oxygen inserting one oxygen atom into a substrate and reducing the second into a water molecule. Two electrons are provided by NADPH via a two-protein mitochondrial transfer system comprising flavoprotein FDXR (adrenodoxin/ferredoxin reductase) and nonheme iron-sulfur protein FDX1 or FDX2 (adrenodoxin/ferredoxin). This Mus musculus (Mouse) protein is Cholesterol side-chain cleavage enzyme, mitochondrial.